The following is a 401-amino-acid chain: Stearoyl-[acyl-carrier-protein] 9-desaturase 3, chloroplastic (401 aa).

The interval methionine 1–arginine 31 is disordered. A chloroplast-targeting transit peptide spans methionine 1–serine 35. Residues glutamate 140, glutamate 178, histidine 181, glutamate 231, glutamate 264, and histidine 267 each coordinate Fe cation.

Belongs to the fatty acid desaturase type 2 family. Homodimer. Fe(2+) is required as a cofactor. Ubiquitously expressed with a preference in leaves, flowers and stems.

The protein localises to the plastid. It is found in the chloroplast. It catalyses the reaction octadecanoyl-[ACP] + 2 reduced [2Fe-2S]-[ferredoxin] + O2 + 2 H(+) = (9Z)-octadecenoyl-[ACP] + 2 oxidized [2Fe-2S]-[ferredoxin] + 2 H2O. Its pathway is lipid metabolism; fatty acid metabolism. In terms of biological role, converts stearoyl-ACP to oleoyl-ACP by introduction of a cis double bond between carbons 9 and 10 of the acyl chain. Also able to convert palmitoyl-ACP to palmitoleoyl-ACP at the C9 position. Exhibits delta-9 palmitoyl-[acyl-carrier-protein] desaturase (PAD) activity. Involved in omega-7 monounsaturated fatty acid biosynthesis, especially in the endosperm oil. The polypeptide is Stearoyl-[acyl-carrier-protein] 9-desaturase 3, chloroplastic (S-ACP-DES3) (Arabidopsis thaliana (Mouse-ear cress)).